Consider the following 289-residue polypeptide: 4-hydroxy-tetrahydrodipicolinate synthase (289 aa).

Position 43 (T43) interacts with pyruvate. Residue Y131 is the Proton donor/acceptor of the active site. K160 acts as the Schiff-base intermediate with substrate in catalysis. V200 lines the pyruvate pocket.

The protein belongs to the DapA family. In terms of assembly, homotetramer; dimer of dimers.

The protein localises to the cytoplasm. The enzyme catalyses L-aspartate 4-semialdehyde + pyruvate = (2S,4S)-4-hydroxy-2,3,4,5-tetrahydrodipicolinate + H2O + H(+). It functions in the pathway amino-acid biosynthesis; L-lysine biosynthesis via DAP pathway; (S)-tetrahydrodipicolinate from L-aspartate: step 3/4. Its function is as follows. Catalyzes the condensation of (S)-aspartate-beta-semialdehyde [(S)-ASA] and pyruvate to 4-hydroxy-tetrahydrodipicolinate (HTPA). This is 4-hydroxy-tetrahydrodipicolinate synthase from Methanococcus maripaludis (strain C6 / ATCC BAA-1332).